Consider the following 669-residue polypeptide: Translation factor GUF1, mitochondrial (669 aa).

Residues 1 to 49 constitute a mitochondrion transit peptide; the sequence is MWTLVGRGWGCARALAPRATGAALLVAPGPRSAPTLGAAPESWATDRLY. A tr-type G domain is found at 66-247; it reads ENIRNFSIVA…AIIERIPPPK (182 aa). Residues 75 to 82, 140 to 144, and 194 to 197 contribute to the GTP site; these read AHVDHGKS, DTPGH, and NKID.

It belongs to the TRAFAC class translation factor GTPase superfamily. Classic translation factor GTPase family. LepA subfamily.

Its subcellular location is the mitochondrion inner membrane. It catalyses the reaction GTP + H2O = GDP + phosphate + H(+). Its function is as follows. Promotes mitochondrial protein synthesis. May act as a fidelity factor of the translation reaction, by catalyzing a one-codon backward translocation of tRNAs on improperly translocated ribosomes. Binds to mitochondrial ribosomes in a GTP-dependent manner. In Homo sapiens (Human), this protein is Translation factor GUF1, mitochondrial.